The chain runs to 342 residues: MSEKTILRALKGERLPVPPVWMMRQAGRYLPEYRATRAQAGDFLSLCYTPDLAAEVTLQPIRRYGFDAAILFADILLLPQALGLDLWFVTGEGPRLSTVTSAAGVAALKPAAAIHDTLSPVYETVRILARELPRETTLIGFAGAPWTVATYMVAGRGTPDQAPAHAFKAEDRAAFAALIDRITEATIDYLSAQIEAGAEVVKLFDSWAGSLKGRDFDDFAVEPARRIIAALKARHPGIPVIAFPREAGPRYAGFARATGADCVALDNSVSADWAAAEVQKDGCVQGNLDPRLLVSGGEELVSETRRIVQAFSRGPHIFNLGHGITPEADPENVARMLEAIRG.

Substrate-binding positions include 24-28 (RQAGR), D74, Y151, S206, and H322.

This sequence belongs to the uroporphyrinogen decarboxylase family. In terms of assembly, homodimer.

It localises to the cytoplasm. The catalysed reaction is uroporphyrinogen III + 4 H(+) = coproporphyrinogen III + 4 CO2. The protein operates within porphyrin-containing compound metabolism; protoporphyrin-IX biosynthesis; coproporphyrinogen-III from 5-aminolevulinate: step 4/4. Catalyzes the decarboxylation of four acetate groups of uroporphyrinogen-III to yield coproporphyrinogen-III. The protein is Uroporphyrinogen decarboxylase of Paracoccus denitrificans (strain Pd 1222).